A 1491-amino-acid polypeptide reads, in one-letter code: Membrane-associated guanylate kinase, WW and PDZ domain-containing protein 1 (1491 aa).

The region spanning 17 to 105 (ECTVKRGPQG…AVTFKAVRQG (89 aa)) is the PDZ 1 domain. A Guanylate kinase-like domain is found at 96–287 (AVTFKAVRQG…APITDPSQKF (192 aa)). Position 103 to 110 (103 to 110 (RQGGRLNK)) interacts with ATP. Positions 236-267 (AENEEEDDVPEMNSSFTADSGEQEEHTLQETA) are disordered. The 34-residue stretch at 300–333 (GPLPENWEMAYTENGEVYFIDHNTKTTSWLDPRC) folds into the WW 1 domain. Residue S357 is modified to Phosphoserine. A WW 2 domain is found at 359–392 (LELPAGWEKIEDPVYGIYYVDHINRKTQYENPVL). Over residues 411-421 (QQQQQQQQQQQ) the composition is skewed to low complexity. The disordered stretch occupies residues 411–462 (QQQQQQQQQQQTEEWTEDHSALVPPVIPNHPPSNPEPAREVPLQGKPFFTRN). The span at 435–445 (PVIPNHPPSNP) shows a compositional bias: pro residues. Positions 472–554 (HTKLRKSSRG…GASVDLELCR (83 aa)) constitute a PDZ 2 domain. Polar residues predominate over residues 586–600 (QETYDSPASHSSKTG). 3 disordered regions span residues 586–623 (QETYDSPASHSSKTGKVNGMKDARPSSPADVASNSSHG), 720–832 (QRGG…FGEC), and 932–987 (TENE…GGGS). The region spanning 643 to 721 (TVHIVKGPMG…GSEVTLLVQR (79 aa)) is the PDZ 3 domain. Residues S730 and S741 each carry the phosphoserine modification. Residues 742 to 752 (QNSSQHSVSSH) are compositionally biased toward low complexity. The segment covering 756 to 766 (HTASPSHSTQV) has biased composition (polar residues). S800 bears the Phosphoserine mark. Residues 813–895 (SGLSKGERER…DELICVDGTP (83 aa)) enclose the PDZ 4 domain. Over residues 939 to 951 (PASSHHSSNQPAS) the composition is skewed to polar residues. Positions 970–1066 (SSGSGSTSGI…DRILAVNGCS (97 aa)) constitute a PDZ 5 domain. The tract at residues 970–1066 (SSGSGSTSGI…DRILAVNGCS (97 aa)) is interaction with FCHSD2. A compositionally biased stretch (gly residues) spans 975–987 (STSGIGSGGGGGS). S1071 carries the post-translational modification Phosphoserine. A compositionally biased stretch (polar residues) spans 1112-1130 (TTTHTPSQQGTQETRNTTK). 2 disordered regions span residues 1112–1143 (TTTHTPSQQGTQETRNTTKPKQESQFEFKAPQ) and 1234–1491 (DGSV…DLSI). Positions 1124-1206 (ETRNTTKPKQ…DEILEINGET (83 aa)) constitute a PDZ 6 domain. Composition is skewed to basic and acidic residues over residues 1278–1338 (DLHK…DAQA), 1354–1396 (KRRE…DGSP), and 1403–1491 (LERL…DLSI). 2 positions are modified to phosphoserine: S1361 and S1412.

As to quaternary structure, part of a complex composed of AMOTL2, MAGI1 and CDH5, within the complex AMOTL2 acts as a scaffold protein for the interaction of MAGI1 with CDH5. The complex is required for coupling actin fibers to cell junctions in endothelial cells. Interacts through its WW 2 domain with SYNPO and through its PDZ 5 domain with ACTN4. Interacts with cytoplasmic domain of ADGRB1. Interacts via its WW domains with DRPLA. Interacts with ESAM, LRP2 and CXADR. May interact with CTNNB1. Interacts through its PDZ 1 domain with NET1. Interacts with ASIC3 and AMOT. Interacts with FCHSD2. Interacts with IGSF5/JAM4 and through its PDZ 2 and 3 domains with NPHS1 forming a tripartite complex. Interacts with DDN. Interacts with DLL1. Interacts with KCNJ10 and possibly with KCNJ10/KCNJ16 heterodimer; this interaction may facilitate KCNJ10/KCNJ16 potassium channel expression at the basolateral membrane in kidney tubular cells. Interacts with PRRG4 (via cytoplasmic domain). Interacts (via PDZ domain) with RAPGEF2. As to expression, widely expressed with the exception of skeletal muscle. Isoform 1, isoform 2 and isoform 6 are highly expressed in colon, kidney, lung, liver, and pancreas. Isoform 5 is predominantly expressed in brain and heart. Isoform 3 and isoform 4 are highly expressed in pancreas and brain.

The protein resides in the cell junction. Its subcellular location is the tight junction. It localises to the cell membrane. In terms of biological role, plays a role in coupling actin fibers to cell junctions in endothelial cells, via its interaction with AMOTL2 and CDH5. May regulate acid-induced ASIC3 currents by modulating its expression at the cell surface. This Homo sapiens (Human) protein is Membrane-associated guanylate kinase, WW and PDZ domain-containing protein 1 (MAGI1).